We begin with the raw amino-acid sequence, 165 residues long: ATP synthase subunit b (165 aa).

The chain crosses the membrane as a helical span at residues 11–31 (LIFWTIVNFLLLVFLLGKFAW).

The protein belongs to the ATPase B chain family. In terms of assembly, F-type ATPases have 2 components, F(1) - the catalytic core - and F(0) - the membrane proton channel. F(1) has five subunits: alpha(3), beta(3), gamma(1), delta(1), epsilon(1). F(0) has three main subunits: a(1), b(2) and c(10-14). The alpha and beta chains form an alternating ring which encloses part of the gamma chain. F(1) is attached to F(0) by a central stalk formed by the gamma and epsilon chains, while a peripheral stalk is formed by the delta and b chains.

The protein localises to the cell membrane. Its function is as follows. F(1)F(0) ATP synthase produces ATP from ADP in the presence of a proton or sodium gradient. F-type ATPases consist of two structural domains, F(1) containing the extramembraneous catalytic core and F(0) containing the membrane proton channel, linked together by a central stalk and a peripheral stalk. During catalysis, ATP synthesis in the catalytic domain of F(1) is coupled via a rotary mechanism of the central stalk subunits to proton translocation. In terms of biological role, component of the F(0) channel, it forms part of the peripheral stalk, linking F(1) to F(0). The sequence is that of ATP synthase subunit b from Elusimicrobium minutum (strain Pei191).